A 251-amino-acid polypeptide reads, in one-letter code: UPF0246 protein TM1040_2658 (251 aa).

The protein belongs to the UPF0246 family.

The chain is UPF0246 protein TM1040_2658 from Ruegeria sp. (strain TM1040) (Silicibacter sp.).